Consider the following 352-residue polypeptide: Homeobox protein Mohawk (352 aa).

The disordered stretch occupies residues 19–54 (GASERERGGRPYSGVLDSPHARPEVGIPDGPPLKDN). The homeobox; TALE-type DNA-binding region spans 71 to 132 (VRHKRQALQD…NARRRLKNTV (62 aa)). 2 disordered regions span residues 159–189 (VSSDDSCSEDGENPPRTHMNEGGYNTPVHHP) and 245–301 (TRQR…PSKD).

The protein belongs to the TALE/IRO homeobox family.

The protein resides in the nucleus. May act as a morphogenetic regulator of cell adhesion. This chain is Homeobox protein Mohawk (MKX), found in Homo sapiens (Human).